The following is a 76-amino-acid chain: Bowman-Birk type proteinase inhibitor DE-3 (76 aa).

Cystine bridges form between Cys-16/Cys-70, Cys-17/Cys-32, Cys-20/Cys-66, Cys-22/Cys-30, Cys-40/Cys-47, Cys-44/Cys-59, and Cys-49/Cys-57.

The protein belongs to the Bowman-Birk serine protease inhibitor family.

In Macrotyloma axillare (Perennial horse gram), this protein is Bowman-Birk type proteinase inhibitor DE-3.